Reading from the N-terminus, the 153-residue chain is Succinate dehydrogenase assembly factor 2, mitochondrial (153 aa).

The protein belongs to the SDHAF2 family. Interacts with the flavoprotein subunit within the SDH catalytic dimer.

It localises to the mitochondrion matrix. Functionally, plays an essential role in the assembly of succinate dehydrogenase (SDH), an enzyme complex (also referred to as respiratory complex II) that is a component of both the tricarboxylic acid (TCA) cycle and the mitochondrial electron transport chain, and which couples the oxidation of succinate to fumarate with the reduction of ubiquinone (coenzyme Q) to ubiquinol. Required for flavinylation (covalent attachment of FAD) of the flavoprotein subunit of the SDH catalytic dimer. The protein is Succinate dehydrogenase assembly factor 2, mitochondrial of Candida glabrata (strain ATCC 2001 / BCRC 20586 / JCM 3761 / NBRC 0622 / NRRL Y-65 / CBS 138) (Yeast).